Consider the following 405-residue polypeptide: Tyrosine--tRNA ligase (405 aa).

Residues 48-57 (PSRPDLHLGH) carry the 'HIGH' region motif. The 'KMSKS' region signature appears at 232–236 (KMSKS). ATP is bound at residue Lys-235. The region spanning 339–400 (LPLVDLLTTL…AGKRKFFRIA (62 aa)) is the S4 RNA-binding domain.

The protein belongs to the class-I aminoacyl-tRNA synthetase family. TyrS type 2 subfamily. Homodimer.

The protein resides in the cytoplasm. The catalysed reaction is tRNA(Tyr) + L-tyrosine + ATP = L-tyrosyl-tRNA(Tyr) + AMP + diphosphate + H(+). Its function is as follows. Catalyzes the attachment of tyrosine to tRNA(Tyr) in a two-step reaction: tyrosine is first activated by ATP to form Tyr-AMP and then transferred to the acceptor end of tRNA(Tyr). The sequence is that of Tyrosine--tRNA ligase from Chlorobium luteolum (strain DSM 273 / BCRC 81028 / 2530) (Pelodictyon luteolum).